Here is a 23-residue protein sequence, read N- to C-terminus: Potassium channel toxin alpha-KTx 13.3 (23 aa).

Disulfide bonds link Cys2–Cys15, Cys5–Cys20, and Cys9–Cys22. An interaction with Ca(2+)-activated K(+) channels region spans residues 13 to 20 (GKCINGRC). Tyrosine amide is present on Tyr23.

Expressed by the venom gland.

The protein resides in the secreted. In terms of biological role, reversibly blocks Shaker B potassium channels, with a dissociation constant of 200 nM. The chain is Potassium channel toxin alpha-KTx 13.3 from Tityus pachyurus (Colombian scorpion).